The following is a 174-amino-acid chain: Heat shock protein 22 (174 aa).

Positions 44–154 constitute a sHSP domain; that stretch reads QIARWQEQEF…TLKEREVTIE (111 aa). Residue Thr-152 is modified to Phosphothreonine. A disordered region spans residues 152–174; sequence TIEQTGEPAKKSAEEPNDKAASQ. Residues 159-174 are compositionally biased toward basic and acidic residues; that stretch reads PAKKSAEEPNDKAASQ.

It belongs to the small heat shock protein (HSP20) family.

The sequence is that of Heat shock protein 22 (Hsp22) from Drosophila melanogaster (Fruit fly).